The chain runs to 167 residues: NAD(P)H-quinone oxidoreductase subunit I, chloroplastic (167 aa).

4Fe-4S ferredoxin-type domains are found at residues 55 to 84 (GRIHFEFDKCIACEVCVRVCPINLPVVDWI) and 95 to 124 (KNYSIDFGVCIFCGNCVEYCPTNCLSMTEE). The [4Fe-4S] cluster site is built by cysteine 64, cysteine 67, cysteine 70, cysteine 74, cysteine 104, cysteine 107, cysteine 110, and cysteine 114.

Belongs to the complex I 23 kDa subunit family. As to quaternary structure, NDH is composed of at least 16 different subunits, 5 of which are encoded in the nucleus. Requires [4Fe-4S] cluster as cofactor.

It localises to the plastid. The protein resides in the chloroplast thylakoid membrane. The catalysed reaction is a plastoquinone + NADH + (n+1) H(+)(in) = a plastoquinol + NAD(+) + n H(+)(out). The enzyme catalyses a plastoquinone + NADPH + (n+1) H(+)(in) = a plastoquinol + NADP(+) + n H(+)(out). Functionally, NDH shuttles electrons from NAD(P)H:plastoquinone, via FMN and iron-sulfur (Fe-S) centers, to quinones in the photosynthetic chain and possibly in a chloroplast respiratory chain. The immediate electron acceptor for the enzyme in this species is believed to be plastoquinone. Couples the redox reaction to proton translocation, and thus conserves the redox energy in a proton gradient. This chain is NAD(P)H-quinone oxidoreductase subunit I, chloroplastic, found in Adiantum capillus-veneris (Maidenhair fern).